We begin with the raw amino-acid sequence, 144 residues long: Large ribosomal subunit protein uL15 (144 aa).

Residues 1–45 are disordered; it reads MNLNTLSPDPGSRPSRRRVGRGIGSGLGKTCGKGHKGQKSRAGGY. Gly residues predominate over residues 21 to 31; that stretch reads RGIGSGLGKTC.

Belongs to the universal ribosomal protein uL15 family. Part of the 50S ribosomal subunit.

Functionally, binds to the 23S rRNA. This Legionella pneumophila (strain Paris) protein is Large ribosomal subunit protein uL15.